Reading from the N-terminus, the 508-residue chain is Histidine ammonia-lyase (508 aa).

Residues Ala143 to Gly145 constitute a cross-link (5-imidazolinone (Ala-Gly)). Ser144 carries the post-translational modification 2,3-didehydroalanine (Ser).

The protein belongs to the PAL/histidase family. In terms of processing, contains an active site 4-methylidene-imidazol-5-one (MIO), which is formed autocatalytically by cyclization and dehydration of residues Ala-Ser-Gly.

It localises to the cytoplasm. The catalysed reaction is L-histidine = trans-urocanate + NH4(+). It functions in the pathway amino-acid degradation; L-histidine degradation into L-glutamate; N-formimidoyl-L-glutamate from L-histidine: step 1/3. The sequence is that of Histidine ammonia-lyase from Anaeromyxobacter sp. (strain K).